The primary structure comprises 138 residues: Ribosome-binding factor A (138 aa).

It belongs to the RbfA family. Monomer. Binds 30S ribosomal subunits, but not 50S ribosomal subunits or 70S ribosomes.

Its subcellular location is the cytoplasm. Its function is as follows. One of several proteins that assist in the late maturation steps of the functional core of the 30S ribosomal subunit. Associates with free 30S ribosomal subunits (but not with 30S subunits that are part of 70S ribosomes or polysomes). Required for efficient processing of 16S rRNA. May interact with the 5'-terminal helix region of 16S rRNA. This chain is Ribosome-binding factor A, found in Bradyrhizobium sp. (strain ORS 278).